We begin with the raw amino-acid sequence, 1106 residues long: Carbamoyl phosphate synthase large chain (1106 aa).

Residues Met-1–Glu-402 are carboxyphosphate synthetic domain. ATP is bound by residues Arg-129, Arg-169, Gly-175, Gly-176, Glu-208, Ile-210, Glu-215, Gly-241, Val-242, His-243, Gln-285, and Glu-299. The 196-residue stretch at Lys-133–Leu-328 folds into the ATP-grasp 1 domain. 3 residues coordinate Mg(2+): Gln-285, Glu-299, and Asn-301. Positions 285, 299, and 301 each coordinate Mn(2+). The segment at Gln-403–Thr-550 is oligomerization domain. The interval Glu-551–Gly-953 is carbamoyl phosphate synthetic domain. The ATP-grasp 2 domain maps to Ala-681–Thr-872. Residues Arg-717, Lys-756, Leu-758, Glu-763, Gly-788, Ile-789, His-790, Ser-791, Gln-831, and Glu-843 each coordinate ATP. Positions 831, 843, and 845 each coordinate Mg(2+). Gln-831, Glu-843, and Asn-845 together coordinate Mn(2+). Residues Gly-954–Asp-1106 enclose the MGS-like domain. The tract at residues Gly-954 to Asp-1106 is allosteric domain.

It belongs to the CarB family. Composed of two chains; the small (or glutamine) chain promotes the hydrolysis of glutamine to ammonia, which is used by the large (or ammonia) chain to synthesize carbamoyl phosphate. Tetramer of heterodimers (alpha,beta)4. Mg(2+) serves as cofactor. It depends on Mn(2+) as a cofactor.

The enzyme catalyses hydrogencarbonate + L-glutamine + 2 ATP + H2O = carbamoyl phosphate + L-glutamate + 2 ADP + phosphate + 2 H(+). The catalysed reaction is hydrogencarbonate + NH4(+) + 2 ATP = carbamoyl phosphate + 2 ADP + phosphate + 2 H(+). The protein operates within amino-acid biosynthesis; L-arginine biosynthesis; carbamoyl phosphate from bicarbonate: step 1/1. Its pathway is pyrimidine metabolism; UMP biosynthesis via de novo pathway; (S)-dihydroorotate from bicarbonate: step 1/3. Large subunit of the glutamine-dependent carbamoyl phosphate synthetase (CPSase). CPSase catalyzes the formation of carbamoyl phosphate from the ammonia moiety of glutamine, carbonate, and phosphate donated by ATP, constituting the first step of 2 biosynthetic pathways, one leading to arginine and/or urea and the other to pyrimidine nucleotides. The large subunit (synthetase) binds the substrates ammonia (free or transferred from glutamine from the small subunit), hydrogencarbonate and ATP and carries out an ATP-coupled ligase reaction, activating hydrogencarbonate by forming carboxy phosphate which reacts with ammonia to form carbamoyl phosphate. This chain is Carbamoyl phosphate synthase large chain, found in Kocuria rhizophila (strain ATCC 9341 / DSM 348 / NBRC 103217 / DC2201).